The chain runs to 400 residues: Lysophospholipid transporter LplT (400 aa).

Helical transmembrane passes span 19 to 39, 53 to 73, 91 to 111, 139 to 159, 164 to 184, 195 to 213, 227 to 247, 257 to 277, 281 to 301, 304 to 324, 352 to 372, and 373 to 393; these read VIVA…ATLA, VLQM…GQIA, AGAA…LVGI, LMEA…GVLA, IAAL…NLFI, SWRL…VVLW, LFWG…PVAL, YLNA…AKLV, TVSR…IFSL, ALLP…FFVV, NSAM…GVPA, and VAIG…LWIW.

Belongs to the major facilitator superfamily. LplT (TC 2.A.1.42) family.

The protein localises to the cell inner membrane. Its function is as follows. Catalyzes the facilitated diffusion of 2-acyl-glycero-3-phosphoethanolamine (2-acyl-GPE) into the cell. The chain is Lysophospholipid transporter LplT from Salmonella agona (strain SL483).